The sequence spans 443 residues: ATP-dependent protease ATPase subunit HslU (443 aa).

ATP-binding positions include Ile18, 60–65 (GVGKTE), Asp256, Glu321, and Arg393.

This sequence belongs to the ClpX chaperone family. HslU subfamily. In terms of assembly, a double ring-shaped homohexamer of HslV is capped on each side by a ring-shaped HslU homohexamer. The assembly of the HslU/HslV complex is dependent on binding of ATP.

The protein resides in the cytoplasm. ATPase subunit of a proteasome-like degradation complex; this subunit has chaperone activity. The binding of ATP and its subsequent hydrolysis by HslU are essential for unfolding of protein substrates subsequently hydrolyzed by HslV. HslU recognizes the N-terminal part of its protein substrates and unfolds these before they are guided to HslV for hydrolysis. The chain is ATP-dependent protease ATPase subunit HslU from Salmonella agona (strain SL483).